The primary structure comprises 155 residues: 17.4 kDa class III heat shock protein (155 aa).

The sHSP domain occupies 35-155 (GRGSSNNIPI…KPKTVQIAVS (121 aa)).

The protein belongs to the small heat shock protein (HSP20) family. In terms of assembly, may form oligomeric structures.

The protein localises to the cytoplasm. The chain is 17.4 kDa class III heat shock protein (HSP17.4B) from Arabidopsis thaliana (Mouse-ear cress).